A 179-amino-acid polypeptide reads, in one-letter code: Protein GrpE (179 aa).

The tract at residues 1 to 29 (MQDQDKYAEQAASIEDPVTAEAASATTPT) is disordered.

Belongs to the GrpE family. In terms of assembly, homodimer.

It localises to the cytoplasm. In terms of biological role, participates actively in the response to hyperosmotic and heat shock by preventing the aggregation of stress-denatured proteins, in association with DnaK and GrpE. It is the nucleotide exchange factor for DnaK and may function as a thermosensor. Unfolded proteins bind initially to DnaJ; upon interaction with the DnaJ-bound protein, DnaK hydrolyzes its bound ATP, resulting in the formation of a stable complex. GrpE releases ADP from DnaK; ATP binding to DnaK triggers the release of the substrate protein, thus completing the reaction cycle. Several rounds of ATP-dependent interactions between DnaJ, DnaK and GrpE are required for fully efficient folding. The sequence is that of Protein GrpE from Janthinobacterium sp. (strain Marseille) (Minibacterium massiliensis).